Reading from the N-terminus, the 139-residue chain is MTNDSASRTPSDNTELTEMQRYVTQQRGTEPAFSGKLLHNKRTGVYHCLCCQAPLFYSDSKYDSGCGWPSFDQPVSSEAVRYLEDDSHNMRRIEIRCGQCDAHLGHVFPDGPKTTGERYCVNSASLSFIDDVDGERVDG.

The MsrB domain maps to 9–131 (TPSDNTELTE…NSASLSFIDD (123 aa)). Zn(2+) contacts are provided by Cys48, Cys51, Cys97, and Cys100. Cys120 (nucleophile) is an active-site residue.

Belongs to the MsrB Met sulfoxide reductase family. Zn(2+) is required as a cofactor.

The enzyme catalyses L-methionyl-[protein] + [thioredoxin]-disulfide + H2O = L-methionyl-(R)-S-oxide-[protein] + [thioredoxin]-dithiol. This is Peptide methionine sulfoxide reductase MsrB from Pectobacterium carotovorum subsp. carotovorum (strain PC1).